Consider the following 332-residue polypeptide: Thiamine-binding periplasmic protein (332 aa).

The signal sequence occupies residues 1 to 20 (MKLLKLTLISTALFSTAALA). Residues Trp-202 and 220–223 (YSTS) each bind thiamine.

This sequence belongs to the bacterial solute-binding protein 1 family. As to quaternary structure, the complex is composed of two ATP-binding proteins (ThiQ), two transmembrane proteins (ThiP) and a solute-binding protein (ThiB).

Its subcellular location is the periplasm. Its function is as follows. Part of the ABC transporter complex ThiBPQ involved in thiamine import. This Haemophilus influenzae (strain ATCC 51907 / DSM 11121 / KW20 / Rd) protein is Thiamine-binding periplasmic protein (thiB).